The chain runs to 419 residues: CinA-like protein (419 aa).

This sequence belongs to the CinA family.

This is CinA-like protein from Acaryochloris marina (strain MBIC 11017).